We begin with the raw amino-acid sequence, 815 residues long: Protein SMAX1-LIKE 3 (815 aa).

Residues 8 to 171 enclose the Clp R domain; sequence VEQALTADAA…TKVEQAVSLE (164 aa). Repeat regions lie at residues 12–80 and 99–171; these read LTAD…LNRL and ISNA…VSLE. Residues 750-769 form a disordered region; it reads SRACSPPSNQKSDGSDQPED. The EAR signature appears at 778–782; the sequence is LDLNL.

Belongs to the ClpA/ClpB family. In terms of assembly, interacts probably with TPL/TPR in an EAR-motif dependent manner. As to expression, expressed in roots and seedlings.

Functionally, may function in a transcriptional corepressor complex. This is Protein SMAX1-LIKE 3 from Arabidopsis thaliana (Mouse-ear cress).